A 256-amino-acid polypeptide reads, in one-letter code: Pimeloyl-[acyl-carrier protein] methyl ester esterase (256 aa).

An AB hydrolase-1 domain is found at 15–242 (HLVLLHGWGL…AAHAPFISHP (228 aa)). Substrate-binding positions include Trp-22, 82-83 (SL), and 143-147 (FLALQ). The active-site Nucleophile is the Ser-82. Residues Asp-207 and His-235 contribute to the active site. His-235 contributes to the substrate binding site.

The protein belongs to the AB hydrolase superfamily. Carboxylesterase BioH family. As to quaternary structure, monomer.

Its subcellular location is the cytoplasm. It catalyses the reaction 6-carboxyhexanoyl-[ACP] methyl ester + H2O = 6-carboxyhexanoyl-[ACP] + methanol + H(+). It participates in cofactor biosynthesis; biotin biosynthesis. In terms of biological role, the physiological role of BioH is to remove the methyl group introduced by BioC when the pimeloyl moiety is complete. It allows to synthesize pimeloyl-ACP via the fatty acid synthetic pathway through the hydrolysis of the ester bonds of pimeloyl-ACP esters. In Escherichia coli O157:H7, this protein is Pimeloyl-[acyl-carrier protein] methyl ester esterase.